Here is a 63-residue protein sequence, read N- to C-terminus: Anionic peptide 10.1 (63 aa).

Positions 1–20 (MISRFCLLFLLVFVVSKIQA) are cleaved as a signal peptide.

It belongs to the non-disulfide-bridged peptide (NDBP) superfamily. Long chain multifunctional peptide (group 2) family. In terms of tissue distribution, expressed by the venom gland.

It is found in the secreted. The chain is Anionic peptide 10.1 from Lychas mucronatus (Chinese swimming scorpion).